We begin with the raw amino-acid sequence, 353 residues long: Tsukushi (353 aa).

A signal peptide spans 1-17; it reads MLCTLFLLLLALGIVQT. Residues 18-59 enclose the LRRNT domain; that stretch reads TRPCFPGCQCEEETFGLFDSFSLIRVDCSSLGPHIVPVPIPL. LRR repeat units lie at residues 60 to 80, 86 to 107, 110 to 131, 133 to 154, 160 to 180, 186 to 207, 208 to 228, 231 to 253, 256 to 277, and 281 to 302; these read DTAHLDLSSNRLETVNESVLG, TLAGLDLSHNLLTSITPTAFSR, YLESLDLSHNGLAALPAEVFTS, PLSDINLSHNRLREVSISAFTT, ALHVDLSHNLIHRLLPYPARA, TIQSLNLSWNRLRAVPDLRDLP, LRYLSLDGNPLATINPGAFMG, GLTHLSLASLQGILQLPPHGFRE, GLQVLDLSGNPKLKWAGAEVFS, and LLQELDLSGSSLVPLPETLLHH. A glycan (N-linked (GlcNAc...) asparagine) is linked at asparagine 75. Asparagine 138 carries an N-linked (GlcNAc...) asparagine glycan. Asparagine 191 carries N-linked (GlcNAc...) asparagine glycosylation.

As to quaternary structure, interacts with FZD4 (via FZ domain); competes with WNT2B for binding to FZD4, inhibiting Wnt signaling and repressing peripheral eye development. Interacts with TGFB1; the interaction contributes to regulation of the hair cycle. Interacts with netrin. Interacts with CCN2. As to expression, expressed at high levels in the liver, small intestine and placenta. Not or barely detectable in other tissues, including whole pancreas, adipose tissues, skeletal muscle, kidney, spleen, brain, lung and testis.

The protein resides in the secreted. Contributes to various developmental events and other processes such as wound healing and cholesterol homeostasis through its interactions with multiple signaling pathways. Wnt signaling inhibitor which competes with WNT2B for binding to Wnt receptor FZD4 and represses WNT2B-dependent development of the peripheral eye. Plays a role in regulating the hair cycle by controlling TGFB1 signaling. Required for the development of the anterior commissure in the brain by inhibiting neurite outgrowth. Essential for terminal differentiation of hippocampal neural stem cells. Plays a role in regulating bone elongation and bone mass by modulating growth plate chondrocyte function and overall body size. Required for development of the inner ear through its involvement in stereocilia formation in inner hair cells. Facilitates wound healing by inhibiting secretion of TGFB1 from macrophages which prevents myofibroblast differentiation, maintaining inflammatory cell quiescence. Plays a role in cholesterol homeostasis by reducing circulating high-density lipoprotein cholesterol, lowering cholesterol efflux capacity and decreasing cholesterol-to-bile acid conversion in the liver. In one study, shown to negatively regulate sympathetic innervation in brown fat, leading to reduced energy expenditure. In another study, shown not to affect brown fat thermogenic capacity, body weight gain or glucose homeostasis. This chain is Tsukushi (Tsku), found in Rattus norvegicus (Rat).